The chain runs to 94 residues: Small ribosomal subunit protein bS6 (94 aa).

The protein belongs to the bacterial ribosomal protein bS6 family.

Binds together with bS18 to 16S ribosomal RNA. The sequence is that of Small ribosomal subunit protein bS6 from Alkaliphilus metalliredigens (strain QYMF).